A 301-amino-acid polypeptide reads, in one-letter code: 33 kDa chaperonin (301 aa).

2 disulfides stabilise this stretch: cysteine 239–cysteine 241 and cysteine 272–cysteine 275.

The protein belongs to the HSP33 family. Under oxidizing conditions two disulfide bonds are formed involving the reactive cysteines. Under reducing conditions zinc is bound to the reactive cysteines and the protein is inactive.

The protein localises to the cytoplasm. Functionally, redox regulated molecular chaperone. Protects both thermally unfolding and oxidatively damaged proteins from irreversible aggregation. Plays an important role in the bacterial defense system toward oxidative stress. This Trichormus variabilis (strain ATCC 29413 / PCC 7937) (Anabaena variabilis) protein is 33 kDa chaperonin.